The primary structure comprises 291 residues: Ribose-phosphate pyrophosphokinase (291 aa).

ATP is bound by residues 34-36 (DGE) and 93-94 (RQ). Residues His-127 and Asp-165 each coordinate Mg(2+). Lys-188 is an active-site residue. Residues Arg-190, Asp-216, and 220–224 (STGGT) contribute to the D-ribose 5-phosphate site.

It belongs to the ribose-phosphate pyrophosphokinase family. Class III (archaeal) subfamily. In terms of assembly, homodimer. Requires Mg(2+) as cofactor.

Its subcellular location is the cytoplasm. It carries out the reaction D-ribose 5-phosphate + ATP = 5-phospho-alpha-D-ribose 1-diphosphate + AMP + H(+). The protein operates within metabolic intermediate biosynthesis; 5-phospho-alpha-D-ribose 1-diphosphate biosynthesis; 5-phospho-alpha-D-ribose 1-diphosphate from D-ribose 5-phosphate (route I): step 1/1. Involved in the biosynthesis of the central metabolite phospho-alpha-D-ribosyl-1-pyrophosphate (PRPP) via the transfer of pyrophosphoryl group from ATP to 1-hydroxyl of ribose-5-phosphate (Rib-5-P). The chain is Ribose-phosphate pyrophosphokinase from Saccharolobus solfataricus (strain ATCC 35092 / DSM 1617 / JCM 11322 / P2) (Sulfolobus solfataricus).